The following is a 293-amino-acid chain: Heterogeneous nuclear ribonucleoprotein D-like-A (293 aa).

A disordered region spans residues 1-21 (MAGFGAAPDFNEGSKINASKN). 2 RRM domains span residues 26-108 (GKMF…KGKE) and 111-188 (KKVF…AAQP). 2 disordered regions span residues 193–224 (RQQQ…GWNQ) and 274–293 (QSTY…YQPY). Residues 202–222 (GGRGAVTGRGGTRGRGRGQGW) show a composition bias toward gly residues.

The protein localises to the nucleus. It is found in the cytoplasm. Its function is as follows. Acts as a transcriptional regulator. Binds DNA and RNA. The polypeptide is Heterogeneous nuclear ribonucleoprotein D-like-A (hnrnpdl-a) (Xenopus laevis (African clawed frog)).